The sequence spans 101 residues: Interleukin-8 (101 aa).

Residues 1–22 (MTSKLAVALLAAFVLSAALCEA) form the signal peptide. Arg27 is subject to Citrulline. 2 disulfides stabilise this stretch: Cys34–Cys61 and Cys36–Cys77.

The protein belongs to the intercrine alpha (chemokine CxC) family. Homodimer. Interacts with TNFAIP6 (via Link domain); this interaction interferes with chemokine binding to glycosaminoglycans. Post-translationally, citrullination at Arg-27 prevents proteolysis, and dampens tissue inflammation, it also enhances leukocytosis, possibly through impaired chemokine clearance from the blood circulation.

It localises to the secreted. In terms of biological role, chemotactic factor that mediates inflammatory response by attracting neutrophils, basophils, and T-cells to clear pathogens and protect the host from infection. Also plays an important role in neutrophil activation. Released in response to an inflammatory stimulus, exerts its effect by binding to the G-protein-coupled receptors CXCR1 and CXCR2, primarily found in neutrophils, monocytes and endothelial cells. G-protein heterotrimer (alpha, beta, gamma subunits) constitutively binds to CXCR1/CXCR2 receptor and activation by IL8 leads to beta and gamma subunits release from Galpha (GNAI2 in neutrophils) and activation of several downstream signaling pathways including PI3K and MAPK pathways. The sequence is that of Interleukin-8 (CXCL8) from Canis lupus familiaris (Dog).